A 310-amino-acid chain; its full sequence is Serine protease 30 (310 aa).

The first 21 residues, 1-21 (MESRARCIFLLLLQILTRARG), serve as a signal peptide directing secretion. Residues 22-36 (DILPSVCGHSRDAGK) constitute a propeptide, activation peptide. Residues 37–277 (IVGGQDALEG…YVDWIQRILA (241 aa)) form the Peptidase S1 domain. A disulfide bond links Cys63 and Cys79. Active-site charge relay system residues include His78 and Asp128. 3 cysteine pairs are disulfide-bonded: Cys161/Cys235, Cys191/Cys214, and Cys225/Cys253. Ser229 functions as the Charge relay system in the catalytic mechanism. Residues Asn238 and Asn279 are each glycosylated (N-linked (GlcNAc...) asparagine). The GPI-anchor amidated serine moiety is linked to residue Ser281. Residues 282 to 310 (DAYGYHSSASAAYQMLLPVLLAVALPGSL) constitute a propeptide, removed in mature form.

This sequence belongs to the peptidase S1 family. Expressed primarily in distal gut.

It is found in the cell membrane. Inhibited by aprotinin, leupeptin, benzamidine and soybean trypsin inhibitor. Partially inhibited by PMSF and DFP. Functionally, selectively cleaves synthetic peptide substrates of trypsin. Activates the epithelial sodium channel ENaC. This chain is Serine protease 30 (Prss30), found in Mus musculus (Mouse).